A 1299-amino-acid polypeptide reads, in one-letter code: MAP3K epsilon protein kinase 1 (1299 aa).

The Protein kinase domain occupies Y20–I274. 2 HEAT repeats span residues E25–N62 and L86–I125. Residues I26–V34 and K49 contribute to the ATP site. The active-site Proton acceptor is D144. The HEAT 3 repeat unit spans residues P218 to K256. Disordered regions lie at residues I291–L458 and G483–K509. The span at S374 to S385 shows a compositional bias: low complexity. 2 stretches are compositionally biased toward polar residues: residues A415–H432 and A488–D501. HEAT repeat units lie at residues S532–L570, V611–D649, N653–L694, M698–L736, N743–L780, D781–D820, Q868–G900, L901–A939, S955–T994, Y998–C1036, A1043–R1081, Q1085–N1122, E1125–R1164, C1186–T1210, T1211–R1249, and Q1279–L1299. The interval V795–K852 is disordered.

Belongs to the protein kinase superfamily. Ser/Thr protein kinase family. Post-translationally, autophosphorylated. Expressed in both the sporophytic and the gametophytic tissues, especially in dividing cells.

It is found in the cytoplasm. It localises to the cytoskeleton. The protein resides in the microtubule organizing center. Its subcellular location is the nucleus. The protein localises to the nucleolus. It is found in the cell membrane. The enzyme catalyses L-seryl-[protein] + ATP = O-phospho-L-seryl-[protein] + ADP + H(+). The catalysed reaction is L-threonyl-[protein] + ATP = O-phospho-L-threonyl-[protein] + ADP + H(+). Functionally, serine/threonine-protein kinase involved in the spatial and temporal control system organizing cortical activities in mitotic and postmitotic cells. Required for the normal functioning of the plasma membrane in developing pollen. Involved in the regulation of cell expansion and embryo development. This Brassica napus (Rape) protein is MAP3K epsilon protein kinase 1.